A 130-amino-acid polypeptide reads, in one-letter code: Protein ApaG (130 aa).

Positions 3–127 (RAVTRNIEVQ…FSLDLPGTRR (125 aa)) constitute an ApaG domain.

This chain is Protein ApaG, found in Mesorhizobium japonicum (strain LMG 29417 / CECT 9101 / MAFF 303099) (Mesorhizobium loti (strain MAFF 303099)).